The chain runs to 580 residues: Alpha-thujene synthase, chloroplastic (580 aa).

Residues 1 to 32 constitute a chloroplast transit peptide; that stretch reads MALQLLTPSFSFQHSPSPHKLTTLRYTHHRIR. (2E)-geranyl diphosphate is bound by residues Arg-296, Asp-333, Asp-337, Arg-473, and Asp-476. Mg(2+)-binding residues include Asp-333 and Asp-337. The short motif at 333–337 is the DDXXD motif element; that stretch reads DDVYD. Asp-476, Thr-480, and Glu-484 together coordinate Mg(2+).

The protein belongs to the terpene synthase family. Tpsb subfamily. As to quaternary structure, monomer. Mg(2+) serves as cofactor. It depends on Mn(2+) as a cofactor. In terms of tissue distribution, expressed in developing and mature fruits. Barely detectable in leaves and shoots.

Its subcellular location is the plastid. The protein resides in the chloroplast. The enzyme catalyses (2E)-geranyl diphosphate = alpha-thujene + diphosphate. It participates in secondary metabolite biosynthesis; terpenoid biosynthesis. Functionally, monoterpene synthase (TPS) involved in the biosynthesis of monoterpene natural products used by traditional Chinese medicine to treat headache, inflammation and intoxication. Catalyzes the conversion of (2E)-geranyl diphosphate (GPP) into alpha-thujene. This chain is Alpha-thujene synthase, chloroplastic, found in Litsea cubeba (Aromatic litsea).